The sequence spans 212 residues: Large ribosomal subunit protein uL3 (212 aa).

Residues 134-154 (RKTHGNSVSHRVPGSIGQNQT) are disordered. Glutamine 153 is subject to N5-methylglutamine.

The protein belongs to the universal ribosomal protein uL3 family. As to quaternary structure, part of the 50S ribosomal subunit. Forms a cluster with proteins L14 and L19. Post-translationally, methylated by PrmB.

Functionally, one of the primary rRNA binding proteins, it binds directly near the 3'-end of the 23S rRNA, where it nucleates assembly of the 50S subunit. This is Large ribosomal subunit protein uL3 from Dichelobacter nodosus (strain VCS1703A).